Here is a 104-residue protein sequence, read N- to C-terminus: Large ribosomal subunit protein uL24 (104 aa).

It belongs to the universal ribosomal protein uL24 family. Part of the 50S ribosomal subunit.

In terms of biological role, one of two assembly initiator proteins, it binds directly to the 5'-end of the 23S rRNA, where it nucleates assembly of the 50S subunit. Its function is as follows. One of the proteins that surrounds the polypeptide exit tunnel on the outside of the subunit. The protein is Large ribosomal subunit protein uL24 of Bartonella quintana (strain Toulouse) (Rochalimaea quintana).